The sequence spans 417 residues: Cobalamin binding intrinsic factor (417 aa).

A signal peptide spans methionine 1–threonine 18. 3 cysteine pairs are disulfide-bonded: cysteine 26-cysteine 246, cysteine 103-cysteine 288, and cysteine 143-cysteine 182. Residue aspartate 171 coordinates cob(II)alamin. Phosphoserine is present on serine 191. Aspartate 222 and glutamine 270 together coordinate cob(II)alamin. Asparagine 311 and asparagine 330 each carry an N-linked (GlcNAc...) asparagine glycan. Residues serine 365–valine 370 and tryptophan 386–leucine 395 contribute to the cob(II)alamin site. The N-linked (GlcNAc...) asparagine glycan is linked to asparagine 413.

This sequence belongs to the eukaryotic cobalamin transport proteins family. Interacts with CUBN (via CUB domains). In terms of tissue distribution, gastric mucosa.

It localises to the secreted. Functionally, promotes absorption of the essential vitamin cobalamin (Cbl) in the ileum. After interaction with CUBN, the CBLIF-cobalamin complex is internalized via receptor-mediated endocytosis. The sequence is that of Cobalamin binding intrinsic factor (Cblif) from Mus musculus (Mouse).